Here is a 729-residue protein sequence, read N- to C-terminus: Fatty acid oxidation complex subunit alpha (729 aa).

The enoyl-CoA hydratase/isomerase stretch occupies residues 1 to 189 (MLYQGESLYL…KVGLVQAVVA (189 aa)). Asp296 lines the substrate pocket. The interval 311-729 (PVPQQAAVLG…HADVSHGQPA (419 aa)) is 3-hydroxyacyl-CoA dehydrogenase. Residues Met324, Asp343, 400–402 (VVE), Lys407, and Ser429 each bind NAD(+). The For 3-hydroxyacyl-CoA dehydrogenase activity role is filled by His450. Asn453 is an NAD(+) binding site. Substrate-binding residues include Asn500 and Tyr660.

This sequence in the N-terminal section; belongs to the enoyl-CoA hydratase/isomerase family. The protein in the C-terminal section; belongs to the 3-hydroxyacyl-CoA dehydrogenase family. Heterotetramer of two alpha chains (FadB) and two beta chains (FadA).

The enzyme catalyses a (3S)-3-hydroxyacyl-CoA + NAD(+) = a 3-oxoacyl-CoA + NADH + H(+). It catalyses the reaction a (3S)-3-hydroxyacyl-CoA = a (2E)-enoyl-CoA + H2O. It carries out the reaction a 4-saturated-(3S)-3-hydroxyacyl-CoA = a (3E)-enoyl-CoA + H2O. The catalysed reaction is (3S)-3-hydroxybutanoyl-CoA = (3R)-3-hydroxybutanoyl-CoA. The enzyme catalyses a (3Z)-enoyl-CoA = a 4-saturated (2E)-enoyl-CoA. It catalyses the reaction a (3E)-enoyl-CoA = a 4-saturated (2E)-enoyl-CoA. It participates in lipid metabolism; fatty acid beta-oxidation. In terms of biological role, involved in the aerobic and anaerobic degradation of long-chain fatty acids via beta-oxidation cycle. Catalyzes the formation of 3-oxoacyl-CoA from enoyl-CoA via L-3-hydroxyacyl-CoA. It can also use D-3-hydroxyacyl-CoA and cis-3-enoyl-CoA as substrate. This Pectobacterium atrosepticum (strain SCRI 1043 / ATCC BAA-672) (Erwinia carotovora subsp. atroseptica) protein is Fatty acid oxidation complex subunit alpha.